Reading from the N-terminus, the 109-residue chain is MSLTDKTCVPCQGGVAPMDRQQAEQMLVQVPEWSLDTDARMIYRRFKFRNFIDALSFVNRVTEVAEAEDHHPDILLGYGYAEVRIQTHKIEGLHENDFILAAKVDALGA.

Belongs to the pterin-4-alpha-carbinolamine dehydratase family.

It carries out the reaction (4aS,6R)-4a-hydroxy-L-erythro-5,6,7,8-tetrahydrobiopterin = (6R)-L-erythro-6,7-dihydrobiopterin + H2O. The sequence is that of Putative pterin-4-alpha-carbinolamine dehydratase from Halorhodospira halophila (strain DSM 244 / SL1) (Ectothiorhodospira halophila (strain DSM 244 / SL1)).